Reading from the N-terminus, the 363-residue chain is Aminomethyltransferase (363 aa).

The protein belongs to the GcvT family. As to quaternary structure, the glycine cleavage system is composed of four proteins: P, T, L and H.

The enzyme catalyses N(6)-[(R)-S(8)-aminomethyldihydrolipoyl]-L-lysyl-[protein] + (6S)-5,6,7,8-tetrahydrofolate = N(6)-[(R)-dihydrolipoyl]-L-lysyl-[protein] + (6R)-5,10-methylene-5,6,7,8-tetrahydrofolate + NH4(+). Functionally, the glycine cleavage system catalyzes the degradation of glycine. The sequence is that of Aminomethyltransferase from Staphylococcus haemolyticus (strain JCSC1435).